The following is a 286-amino-acid chain: Main hemagglutinin component type C (286 aa).

The stretch at Ser-2–Asn-55 is one 1-alpha repeat. 2 Ricin B-type lectin domains span residues Asn-12–Ser-140 and Asp-180–Asn-284. The 1-beta repeat unit spans residues Lys-56–Ile-100. The 1-gamma repeat unit spans residues Ser-101 to Asn-148. The 2-alpha repeat unit spans residues Asn-149–Thr-193. The sugar-binding site 1 stretch occupies residues Asn-167 to Arg-183. The 2-beta repeat unit spans residues Lys-194–Asp-239. A 2-gamma repeat occupies Ala-240–Ile-286. The tract at residues Asp-256–Gln-279 is sugar-binding site 2.

As to quaternary structure, botulinum toxins are produced as progenitor toxins of large molecular sizes of 12S (M toxin) and 16S (L toxin). M toxin consists of a non-toxic, non-hemagglutinin component (NTNHA) and the neurotoxin. L toxin consists of the M toxin and the 3 subcomponents of hemagglutinin (HA). HA is composed of subcomponents of 70, 33, and 17 kDa. The 70 kDa subcomponent undergoes proteolytic processing and is split into HA-55 (also called HA-53 and HA3b) and HA-22-23 (also called HA3a). The stoichiometry of the whole complex has been modeled as one BoNT/C, one NTNHA, three HA-70, six HA-33 and three HA-17.

It localises to the secreted. Functionally, agglutinates human erythrocytes. The hemagglutinin (HA) component of the progenitor toxin protects the structural integrity of botulinum neurotoxin; may increase internalization of the neurotoxin into the bloodstream of the host. The hemagglutinin (HA) component is involved in binding to the upper small intestine through interactions with glycolipids and glycoproteins containing sialic acid moieties. Binds galactose or oligosaccharides with galactose at their non-reducing end. Binds eukaryotic host mucins; binding is inhibited by N-acetyl-beta-neuraminic acid, N-acetyl-D-galactosamine, galactose, and methyl N-acetyl-beta-neuraminic acid. Binds N-acetyl-beta-neuraminic acid, N-acetyl-D-galactosamine and galactose (but not glucose) via 2 sites. This is Main hemagglutinin component type C from Clostridium botulinum C (Clostridium botulinum C bacteriophage).